A 548-amino-acid chain; its full sequence is Chaperonin GroEL (548 aa).

Residues 30–33 (TLGP), K51, 87–91 (DGTTT), G415, 478–480 (NAA), and D494 each bind ATP.

Belongs to the chaperonin (HSP60) family. Forms a cylinder of 14 subunits composed of two heptameric rings stacked back-to-back. Interacts with the co-chaperonin GroES.

The protein localises to the cytoplasm. The enzyme catalyses ATP + H2O + a folded polypeptide = ADP + phosphate + an unfolded polypeptide.. Its function is as follows. Together with its co-chaperonin GroES, plays an essential role in assisting protein folding. The GroEL-GroES system forms a nano-cage that allows encapsulation of the non-native substrate proteins and provides a physical environment optimized to promote and accelerate protein folding. This chain is Chaperonin GroEL, found in Janthinobacterium sp. (strain Marseille) (Minibacterium massiliensis).